An 86-amino-acid chain; its full sequence is Cell division topological specificity factor (86 aa).

Belongs to the MinE family.

Prevents the cell division inhibition by proteins MinC and MinD at internal division sites while permitting inhibition at polar sites. This ensures cell division at the proper site by restricting the formation of a division septum at the midpoint of the long axis of the cell. This is Cell division topological specificity factor from Stenotrophomonas maltophilia (strain R551-3).